Reading from the N-terminus, the 1101-residue chain is Translation initiation factor IF-2 (1101 aa).

Disordered regions lie at residues 81-437 and 452-509; these read QEIL…EDDF and SIST…QRAE. Over residues 93-108 the composition is skewed to polar residues; the sequence is PFSSTDAPVGSGQSSP. Positions 110–124 are enriched in pro residues; the sequence is IEPPRPPMKPQPPSP. 2 stretches are compositionally biased toward polar residues: residues 128 to 149 and 157 to 184; these read EVTS…GSSS and SPMS…QLKY. Residues 185–196 show a composition bias toward low complexity; that stretch reads NQEQSNQLEQES. Polar residues predominate over residues 197-206; sequence AISSELSEVN. Basic and acidic residues-rich tracts occupy residues 228–237, 248–288, and 295–340; these read SKEKEAKSNE, KENK…DKKS, and VKRE…ELKR. The segment covering 361-378 has biased composition (acidic residues); the sequence is EPEDVEDTAEDLLEEDPL. 2 stretches are compositionally biased toward basic residues: residues 385 to 397 and 414 to 428; these read PKLK…KVGK and KAGK…KRRQ. The span at 484–506 shows a compositional bias: basic and acidic residues; that stretch reads EPGRGKSAERERSERKDRKEQPQ. The tr-type G domain maps to 592–765; that stretch reads RRPPVVTIMG…LLVAEVGELS (174 aa). The tract at residues 601–608 is G1; it reads GHVDHGKT. Residue 601–608 participates in GTP binding; sequence GHVDHGKT. The interval 626 to 630 is G2; the sequence is GITQH. The segment at 651-654 is G3; the sequence is DTPG. Residues 651 to 655 and 705 to 708 contribute to the GTP site; these read DTPGH and NKID. Residues 705-708 are G4; sequence NKID. Positions 741–743 are G5; sequence SAL.

It belongs to the TRAFAC class translation factor GTPase superfamily. Classic translation factor GTPase family. IF-2 subfamily.

It localises to the cytoplasm. Functionally, one of the essential components for the initiation of protein synthesis. Protects formylmethionyl-tRNA from spontaneous hydrolysis and promotes its binding to the 30S ribosomal subunits. Also involved in the hydrolysis of GTP during the formation of the 70S ribosomal complex. The sequence is that of Translation initiation factor IF-2 from Gloeothece citriformis (strain PCC 7424) (Cyanothece sp. (strain PCC 7424)).